The sequence spans 299 residues: Tyrosine recombinase XerC (299 aa).

Positions 1 to 85 constitute a Core-binding (CB) domain; that stretch reads MEQHLDAYCM…AVRGFYKYLN (85 aa). One can recognise a Tyr recombinase domain in the interval 106–285; that stretch reads RLPKTLDTDR…DFQHLATVYD (180 aa). Active-site residues include arginine 146, lysine 170, histidine 237, arginine 240, and histidine 263. Tyrosine 272 (O-(3'-phospho-DNA)-tyrosine intermediate) is an active-site residue.

It belongs to the 'phage' integrase family. XerC subfamily. In terms of assembly, forms a cyclic heterotetrameric complex composed of two molecules of XerC and two molecules of XerD.

Its subcellular location is the cytoplasm. Site-specific tyrosine recombinase, which acts by catalyzing the cutting and rejoining of the recombining DNA molecules. The XerC-XerD complex is essential to convert dimers of the bacterial chromosome into monomers to permit their segregation at cell division. It also contributes to the segregational stability of plasmids. The sequence is that of Tyrosine recombinase XerC from Pseudomonas syringae pv. tomato (strain ATCC BAA-871 / DC3000).